Reading from the N-terminus, the 407-residue chain is Glucose-1-phosphate adenylyltransferase 2 (407 aa).

Alpha-D-glucose 1-phosphate-binding positions include Tyr97, Gly162, 177-178, and Ser195; that span reads EK.

It belongs to the bacterial/plant glucose-1-phosphate adenylyltransferase family. As to quaternary structure, homotetramer.

It catalyses the reaction alpha-D-glucose 1-phosphate + ATP + H(+) = ADP-alpha-D-glucose + diphosphate. It participates in glycan biosynthesis; glycogen biosynthesis. In terms of biological role, involved in the biosynthesis of ADP-glucose, a building block required for the elongation reactions to produce glycogen. Catalyzes the reaction between ATP and alpha-D-glucose 1-phosphate (G1P) to produce pyrophosphate and ADP-Glc. This Vibrio cholerae serotype O1 (strain ATCC 39315 / El Tor Inaba N16961) protein is Glucose-1-phosphate adenylyltransferase 2.